The chain runs to 93 residues: CRISPR-associated endoribonuclease Cas2 3 (93 aa).

D10 provides a ligand contact to Mg(2+).

The protein belongs to the CRISPR-associated endoribonuclease Cas2 protein family. In terms of assembly, homodimer, forms a heterotetramer with a Cas1 homodimer. Mg(2+) serves as cofactor.

Functionally, CRISPR (clustered regularly interspaced short palindromic repeat), is an adaptive immune system that provides protection against mobile genetic elements (viruses, transposable elements and conjugative plasmids). CRISPR clusters contain sequences complementary to antecedent mobile elements and target invading nucleic acids. CRISPR clusters are transcribed and processed into CRISPR RNA (crRNA). Functions as a ssRNA-specific endoribonuclease. Involved in the integration of spacer DNA into the CRISPR cassette. In Chloroflexus aurantiacus (strain ATCC 29366 / DSM 635 / J-10-fl), this protein is CRISPR-associated endoribonuclease Cas2 3.